A 1194-amino-acid chain; its full sequence is ATP-dependent RNA helicase DHX30 (1194 aa).

The span at 1 to 10 shows a compositional bias: basic and acidic residues; it reads MFTLDSFRKD. The interval 1 to 27 is disordered; it reads MFTLDSFRKDRTQHRQRQCKLPPPRLP. S6 is subject to Phosphoserine. Residues 53–121 enclose the DRBM domain; the sequence is PKNLLNSVIG…QAAAAACQLF (69 aa). Positions 153 to 200 are disordered; that stretch reads WWRPEPTMPPTSWRQLNPENIRPAGTGGLSRSLGREEEEDEEEELEEG. Positions 188 to 200 are enriched in acidic residues; sequence EEEEDEEEELEEG. A phosphoserine mark is found at S226 and S380. Residues 444–612 form the Helicase ATP-binding domain; sequence LSAIEQHPVV…FGGCPVIKVP (169 aa). 457-464 contributes to the ATP binding site; that stretch reads GDTGCGKT. The short motif at 559-562 is the DEAH box element; it reads DEVH. The region spanning 654–827 is the Helicase C-terminal domain; it reads LVTDLVLHID…NLVLQAKIHM (174 aa).

Belongs to the DEAD box helicase family. DEAH subfamily. In terms of assembly, identified in a complex with TFAM and SSBP1. Interacts (via N-terminus) with ZC3HAV1 (via N-terminal domain) in an RNA-independent manner. Found in a complex with GRSF1, DDX28, FASTKD2 and FASTKD5.

The protein localises to the cytoplasm. It is found in the mitochondrion. The protein resides in the mitochondrion matrix. It localises to the mitochondrion nucleoid. It carries out the reaction ATP + H2O = ADP + phosphate + H(+). Its function is as follows. RNA-dependent helicase. Plays an important role in the assembly of the mitochondrial large ribosomal subunit. Associates with mitochondrial DNA. Required for optimal function of the zinc-finger antiviral protein ZC3HAV1. Involved in nervous system development and differentiation through its involvement in the up-regulation of a number of genes which are required for neurogenesis, including GSC, NCAM1, neurogenin, and NEUROD. In Rattus norvegicus (Rat), this protein is ATP-dependent RNA helicase DHX30 (Dhx30).